The chain runs to 374 residues: uncharacterized protein (374 aa).

This sequence belongs to the mimivirus R640 family.

It localises to the virion. This is an uncharacterized protein from Acanthamoeba polyphaga (Amoeba).